The chain runs to 256 residues: MATLISLNDANRMLIADSQEEFLQIACYDWISTANKAIHKRGAFYVALSGGKTPLQIFQEIVKKRAAISDCSKIVVFWGDERANEDVEAGSNYLKAMDILKGLRIPEDQIFRMDTADPKGDEAYEALIQKYVPDAIFDMVMLGVGEDGHTLSLFPETHALEEKERFVVFNEVPQLHTRRMTLTFPIVRQARHLVAYVQGENKQDLFHKLVHPLGRDTFPIERVGTPLNPVQWVLSSDSCRKTDLADIPADCKLEMF.

Belongs to the glucosamine/galactosamine-6-phosphate isomerase family. 6-phosphogluconolactonase subfamily.

It catalyses the reaction 6-phospho-D-glucono-1,5-lactone + H2O = 6-phospho-D-gluconate + H(+). It participates in carbohydrate degradation; pentose phosphate pathway; D-ribulose 5-phosphate from D-glucose 6-phosphate (oxidative stage): step 2/3. In terms of biological role, hydrolysis of 6-phosphogluconolactone to 6-phosphogluconate. The protein is 6-phosphogluconolactonase (pgl) of Chlamydia trachomatis serovar D (strain ATCC VR-885 / DSM 19411 / UW-3/Cx).